We begin with the raw amino-acid sequence, 252 residues long: 3-dehydroquinate dehydratase (252 aa).

3-dehydroquinate contacts are provided by residues serine 21, 46 to 48 (EWR), and arginine 82. Catalysis depends on histidine 143, which acts as the Proton donor/acceptor. Lysine 170 serves as the catalytic Schiff-base intermediate with substrate. Residues arginine 213, serine 232, and glutamine 236 each coordinate 3-dehydroquinate.

Belongs to the type-I 3-dehydroquinase family. As to quaternary structure, homodimer.

It carries out the reaction 3-dehydroquinate = 3-dehydroshikimate + H2O. Its pathway is metabolic intermediate biosynthesis; chorismate biosynthesis; chorismate from D-erythrose 4-phosphate and phosphoenolpyruvate: step 3/7. In terms of biological role, involved in the third step of the chorismate pathway, which leads to the biosynthesis of aromatic amino acids. Catalyzes the cis-dehydration of 3-dehydroquinate (DHQ) and introduces the first double bond of the aromatic ring to yield 3-dehydroshikimate. This Escherichia coli O17:K52:H18 (strain UMN026 / ExPEC) protein is 3-dehydroquinate dehydratase.